The sequence spans 526 residues: Na(+)/H(+) antiporter NhaB (526 aa).

The next 13 membrane-spanning stretches (helical) occupy residues 14–34, 35–55, 99–119, 122–142, 146–166, 206–226, 239–259, 307–327, 328–348, 357–377, 397–417, 451–471, and 479–499; these read FLGYAPDWYKLTIFGFLLINP, LLFYFVSPFWAGWLLVVEFIF, MLLVFMVAGIYFMKQLLLFVF, LLLRIHSKPLLSLAFCMAAAF, FLDALTVIAVIISVAIGFYGI, LMMHAGVGTALGGVMTMVGEP, FVDFFLRMSPVTVPVFICGIL, AVIGVWLIIALAFHLAEVGLI, GLSVIIMATTFCGVTEEHAIG, FTALLTVFFAIVAVIIDQQLF, YLFNGLLSSISDNVFVGSVYI, ATPNGQAAFLFLLTSSLAPLI, and VIMALPYTIVMTLVGLLCVEF.

This sequence belongs to the NhaB Na(+)/H(+) (TC 2.A.34) antiporter family.

The protein resides in the cell inner membrane. It catalyses the reaction 2 Na(+)(in) + 3 H(+)(out) = 2 Na(+)(out) + 3 H(+)(in). Functionally, na(+)/H(+) antiporter that extrudes sodium in exchange for external protons. This chain is Na(+)/H(+) antiporter NhaB, found in Pectobacterium atrosepticum (strain SCRI 1043 / ATCC BAA-672) (Erwinia carotovora subsp. atroseptica).